A 552-amino-acid chain; its full sequence is Hyaluronan synthase 2 (552 aa).

The Cytoplasmic segment spans residues 1–11 (MHCERFLCILR). The chain crosses the membrane as a helical span at residues 12–32 (IIGTTLFGVSLLLGITAAYIV). Residues 33 to 45 (GYQFIQTDNYYFS) are Extracellular-facing. The chain crosses the membrane as a helical span at residues 46-66 (FGLYGAFLASHLIIQSLFAFL). Residues 67-374 (EHRKMKKSLE…NAMWFHKHHL (308 aa)) are Cytoplasmic-facing. Threonine 110 is subject to Phosphothreonine. Lysine 190 participates in a covalent cross-link: Glycyl lysine isopeptide (Lys-Gly) (interchain with G-Cter in ubiquitin). An O-linked (GlcNAc) serine glycan is attached at serine 221. Threonine 328 is modified (phosphothreonine). Residues 375–395 (WMTYEAVITGFFPFFLIATVI) traverse the membrane as a helical segment. The Extracellular segment spans residues 396-402 (QLFYRGK). The chain crosses the membrane as a helical span at residues 403–423 (IWNTLLFLLTVQLVGLIKSSF). Over 424 to 429 (ASCLRG) the chain is Cytoplasmic. Residues 430–450 (NIVMVFMSLYSVLYMSSLLPA) form a helical membrane-spanning segment. Over 451 to 475 (KMFAIATINKAGWGTSGRKTIVVNF) the chain is Extracellular. Residues 476 to 496 (IGLIPVSVWFTILLGGVIFTI) form a helical membrane-spanning segment. Residues 497–510 (YKESKKPFSESKQT) are Cytoplasmic-facing. A helical transmembrane segment spans residues 511-531 (VLIVGTLLYACYWVMLLTLYV). Residues 532–552 (VLINKCGRRKKGQQYDMVLDV) are Extracellular-facing.

The protein belongs to the NodC/HAS family. Homodimer; dimerization promotes enzymatic activity. Forms heterodimer with HAS3. Forms heterodimer with HAS1. The cofactor is Mg(2+). In terms of processing, phosphorylation at Thr-328 is essential for hyaluronan synthase activity. O-GlcNAcylation at Ser-221 increases the stability of HAS2 and plasma membrane localization. Post-translationally, ubiquitination at Lys-190; this ubiquitination is essential for hyaluronan synthase activity and homo- or hetero-oligomerization. Can also be poly-ubiquitinated. Deubiquitinated by USP17 and USP4. USP17 efficiently removes 'Lys-63'- and 'Lys-48'-linked polyubiquitin chains, whereas USP4 preferentially removes monoubiquitination and, partially, both 'Lys-63'- and 'Lys-48'-linked polyubiquitin chain. Expressed in corneal endothelial cells.

It localises to the cell membrane. The protein localises to the endoplasmic reticulum membrane. Its subcellular location is the vesicle. It is found in the golgi apparatus membrane. The protein resides in the lysosome. It catalyses the reaction [hyaluronan](n) + UDP-N-acetyl-alpha-D-glucosamine = N-acetyl-beta-D-glucosaminyl-(1-&gt;4)-[hyaluronan](n) + UDP + H(+). The enzyme catalyses N-acetyl-beta-D-glucosaminyl-(1-&gt;4)-[hyaluronan](n) + UDP-alpha-D-glucuronate = [hyaluronan](n+1) + UDP + H(+). Its pathway is glycan biosynthesis; hyaluronan biosynthesis. Catalyzes the addition of GlcNAc or GlcUA monosaccharides to the nascent hyaluronan polymer. Therefore, it is essential to hyaluronan synthesis a major component of most extracellular matrices that has a structural role in tissues architectures and regulates cell adhesion, migration and differentiation. This is one of three isoenzymes responsible for cellular hyaluronan synthesis and it is particularly responsible for the synthesis of high molecular mass hyaluronan. This chain is Hyaluronan synthase 2 (HAS2), found in Bos taurus (Bovine).